We begin with the raw amino-acid sequence, 351 residues long: MTPTNQSSGTTNASVEVLSEDGPMPINVMMQEGVKALTKILSNQLQDRQAFQNAPHAMQFVIRNGGKALSNARLEELKDALPKMDSLSLEDELAKIDGQSAYHIDSAEEKETFESKIGQIASRNSADFIIEEDLQNILDDDLKDSELNLDGEEAEIIFDYESQELDTPDGIGEKISQMIESVLPGGFGSEEQGGLRTVTNVEDLDVAEEVTDIDHDTVDAARLHGDGQHSISSRKHSRSKNSKKNGHVRRHDFYDESRDHKSCCPHHHYENLSKLRNYYYHDFEYISRTENRVPDFSVLVNESSPMCLFCEYYMVFGEPPRNMIKWYNRTFGYNRMPNPPRDEQDSRKRNR.

A compositionally biased stretch (polar residues) spans M1–S14. The segment at M1–E20 is disordered. Phosphoserine is present on residues S100 and S106. The residue at position 211 (T211) is a Phosphothreonine. Residues L223–R249 form a disordered region. Positions S232–R249 are enriched in basic residues.

It belongs to the IBD2 family. Interacts with BFA1.

Its subcellular location is the cytoplasm. It localises to the cytoskeleton. The protein localises to the spindle pole. Functionally, part of a checkpoint which monitors spindle integrity and prevents premature exit from mitosis. This cell-cycle arrest depends upon inhibition of the G-protein TEM1 by the BFA1/BUB2 complex. The sequence is that of Protein IBD2 (IBD2) from Saccharomyces cerevisiae (strain ATCC 204508 / S288c) (Baker's yeast).